Consider the following 552-residue polypeptide: MIMFCVQCEQTIRTPAENGCSYAQGMCGKTAETSDLQDLLIAALQGLSAWAVKAREYGIINHDVDSFAPRAFFSTLTNVNFDSPRIVGYAREAIALREALKAQCLAVDANARVDNPMADLQLVSDDLGELQRQAAEFTPNKDKAAIGENILGLRLLCLYGLKGAAAYMEHAHVLGQYDNDIYAQYHKIMAWLGTWPADMNALLECSMEIGQMNFKVMSILDAGETGKYGHPTPTQVNVKATAGKCILISGHDLKDLYNLLEQTEGTGVNVYTHGEMLPAHGYPELRKFKHLVGNYGSGWQNQQVEFARFPGPIVMTSNCIIDPTVGAYDDRIWTRSIVGWPGVRHLDGEDFSAVIAQAQQMAGFPYSEIPHLITVGFGRQTLLGAADTLIDLVSREKLRHIFLLGGCDGARGERHYFTDFATSVPDDCLILTLACGKYRFNKLEFGDIEGLPRLVDAGQCNDAYSAIILAVTLAEKLGCGVNDLPLSLVLSWFEQKAIVILLTLLSLGVKNIVTGPTAPGFLTPDLLAVLNEKFGLRSITTVEEDMKQLLNA.

Residues Cys5, Cys8, Cys20, and Cys27 each contribute to the [2Fe-2S] cluster site. Residues His251, Glu275, Cys319, Cys407, Cys435, Cys460, Glu494, and Lys496 each coordinate hybrid [4Fe-2O-2S] cluster. Cysteine persulfide is present on Cys407.

The protein belongs to the HCP family. It depends on [2Fe-2S] cluster as a cofactor. The cofactor is hybrid [4Fe-2O-2S] cluster.

It localises to the cytoplasm. It carries out the reaction A + NH4(+) + H2O = hydroxylamine + AH2 + H(+). Functionally, catalyzes the reduction of hydroxylamine to form NH(3) and H(2)O. The protein is Hydroxylamine reductase of Shigella flexneri.